Here is an 85-residue protein sequence, read N- to C-terminus: UPF0386 protein RHECIAT_CH0001945 (85 aa).

Belongs to the UPF0386 family.

The chain is UPF0386 protein RHECIAT_CH0001945 from Rhizobium etli (strain CIAT 652).